We begin with the raw amino-acid sequence, 473 residues long: Photosystem II CP43 reaction center protein (473 aa).

Positions 1–14 (MKTLYSLRRFYPVE) are excised as a propeptide. Thr15 is subject to N-acetylthreonine. The residue at position 15 (Thr15) is a Phosphothreonine. 5 consecutive transmembrane segments (helical) span residues 69 to 93 (LFEV…PHLA), 134 to 155 (LLGP…KDRN), 178 to 200 (KALY…RKIT), 255 to 275 (KPFA…LSYS), and 291 to 312 (WFNN…ASQA). Residue Glu367 coordinates [CaMn4O5] cluster. Residues 447 to 471 (RARAAAAGFEKGIDRDLEPVLSMTP) form a helical membrane-spanning segment.

This sequence belongs to the PsbB/PsbC family. PsbC subfamily. As to quaternary structure, PSII is composed of 1 copy each of membrane proteins PsbA, PsbB, PsbC, PsbD, PsbE, PsbF, PsbH, PsbI, PsbJ, PsbK, PsbL, PsbM, PsbT, PsbX, PsbY, PsbZ, Psb30/Ycf12, at least 3 peripheral proteins of the oxygen-evolving complex and a large number of cofactors. It forms dimeric complexes. Binds multiple chlorophylls and provides some of the ligands for the Ca-4Mn-5O cluster of the oxygen-evolving complex. It may also provide a ligand for a Cl- that is required for oxygen evolution. PSII binds additional chlorophylls, carotenoids and specific lipids. is required as a cofactor.

It localises to the plastid. Its subcellular location is the chloroplast thylakoid membrane. In terms of biological role, one of the components of the core complex of photosystem II (PSII). It binds chlorophyll and helps catalyze the primary light-induced photochemical processes of PSII. PSII is a light-driven water:plastoquinone oxidoreductase, using light energy to abstract electrons from H(2)O, generating O(2) and a proton gradient subsequently used for ATP formation. The chain is Photosystem II CP43 reaction center protein from Acorus calamus var. americanus (American sweet flag).